Here is a 387-residue protein sequence, read N- to C-terminus: Acetylornithine aminotransferase (387 aa).

Residues 97-98 and phenylalanine 130 each bind pyridoxal 5'-phosphate; that span reads GT. Arginine 133 lines the N(2)-acetyl-L-ornithine pocket. 215 to 218 lines the pyridoxal 5'-phosphate pocket; the sequence is DEVQ. N6-(pyridoxal phosphate)lysine is present on lysine 244. A pyridoxal 5'-phosphate-binding site is contributed by threonine 273.

The protein belongs to the class-III pyridoxal-phosphate-dependent aminotransferase family. ArgD subfamily. Homodimer. It depends on pyridoxal 5'-phosphate as a cofactor.

The protein resides in the cytoplasm. It catalyses the reaction N(2)-acetyl-L-ornithine + 2-oxoglutarate = N-acetyl-L-glutamate 5-semialdehyde + L-glutamate. It functions in the pathway amino-acid biosynthesis; L-arginine biosynthesis; N(2)-acetyl-L-ornithine from L-glutamate: step 4/4. This is Acetylornithine aminotransferase from Clostridium acetobutylicum (strain ATCC 824 / DSM 792 / JCM 1419 / IAM 19013 / LMG 5710 / NBRC 13948 / NRRL B-527 / VKM B-1787 / 2291 / W).